We begin with the raw amino-acid sequence, 287 residues long: Pirin-1 (287 aa).

Thr-2 carries the post-translational modification N-acetylthreonine.

This sequence belongs to the pirin family. As to quaternary structure, interacts with the G protein alpha-1 subunit GPA1. Interacts with NFYB6 and NFYB9.

The protein resides in the nucleus. Its function is as follows. Involved in abscisic acid signal transduction. Plays a role in seed germination and early seedling development. Involved in the blue light (BL) signaling. The protein is Pirin-1 (PRN1) of Arabidopsis thaliana (Mouse-ear cress).